A 182-amino-acid polypeptide reads, in one-letter code: ATP synthase subunit delta (182 aa).

Belongs to the ATPase delta chain family. In terms of assembly, F-type ATPases have 2 components, F(1) - the catalytic core - and F(0) - the membrane proton channel. F(1) has five subunits: alpha(3), beta(3), gamma(1), delta(1), epsilon(1). CF(0) has four main subunits: a(1), b(1), b'(1) and c(10-14). The alpha and beta chains form an alternating ring which encloses part of the gamma chain. F(1) is attached to F(0) by a central stalk formed by the gamma and epsilon chains, while a peripheral stalk is formed by the delta, b and b' chains.

It localises to the cellular thylakoid membrane. In terms of biological role, f(1)F(0) ATP synthase produces ATP from ADP in the presence of a proton or sodium gradient. F-type ATPases consist of two structural domains, F(1) containing the extramembraneous catalytic core and F(0) containing the membrane proton channel, linked together by a central stalk and a peripheral stalk. During catalysis, ATP synthesis in the catalytic domain of F(1) is coupled via a rotary mechanism of the central stalk subunits to proton translocation. This protein is part of the stalk that links CF(0) to CF(1). It either transmits conformational changes from CF(0) to CF(1) or is implicated in proton conduction. This is ATP synthase subunit delta from Prochlorococcus marinus (strain NATL1A).